We begin with the raw amino-acid sequence, 120 residues long: Large ribosomal subunit protein uL22 (120 aa).

The disordered stretch occupies residues 1–20; that stretch reads MFVNRRYTARGKNLPSSPKK.

This sequence belongs to the universal ribosomal protein uL22 family. In terms of assembly, part of the 50S ribosomal subunit.

In terms of biological role, this protein binds specifically to 23S rRNA; its binding is stimulated by other ribosomal proteins, e.g. L4, L17, and L20. It is important during the early stages of 50S assembly. It makes multiple contacts with different domains of the 23S rRNA in the assembled 50S subunit and ribosome. Its function is as follows. The globular domain of the protein is located near the polypeptide exit tunnel on the outside of the subunit, while an extended beta-hairpin is found that lines the wall of the exit tunnel in the center of the 70S ribosome. The protein is Large ribosomal subunit protein uL22 of Borrelia turicatae (strain 91E135).